We begin with the raw amino-acid sequence, 63 residues long: MQFSGVVLILISMTLVNFVFFETKVEAGKFGKCKPNICAKTCQTEKGKGMGYCNKTECVCSEW.

Positions 1–27 (MQFSGVVLILISMTLVNFVFFETKVEA) are cleaved as a signal peptide. 3 disulfide bridges follow: Cys33/Cys53, Cys38/Cys58, and Cys42/Cys60.

This sequence belongs to the short scorpion toxin superfamily. Potassium channel inhibitor family. Alpha-KTx 21 subfamily. As to expression, expressed by the venom gland.

It is found in the secreted. Functionally, reversibly and voltage-independently blocks voltage-gated potassium channels rKv1.2/KCNA2 (73%) (IC(50)=196 nM), hKv1.3/KCNA3 (50%) (IC(50)=508 nM), Shaker IR (30%), rKv1.6/KCNA6 (22%) (at 0.5 uM). Interaction of Ts15 with Kv1.3/KCNA3 is stronger than its interaction with Kv1.2/KCNA2. The chain is Potassium channel toxin alpha-KTx 21.1 from Tityus serrulatus (Brazilian scorpion).